A 219-amino-acid chain; its full sequence is Mucosal pentraxin (219 aa).

The N-terminal stretch at 1–19 is a signal peptide; sequence MEKLIVGILFLSVLSGSVA. The Pentraxin (PTX) domain occupies 24-219; the sequence is KGKAFIFPQE…YVVIKPKLWP (196 aa). The N-linked (GlcNAc...) asparagine glycan is linked to Asn-51. Cys-55 and Cys-114 are joined by a disulfide. Residues Asp-77, Asn-78, Glu-155, Gln-156, Asp-157, and Gln-167 each coordinate Ca(2+).

The protein belongs to the pentraxin family. As to quaternary structure, homopentamer. Pentraxin (or pentaxin) have a discoid arrangement of 5 non-covalently bound subunits. Ca(2+) is required as a cofactor. As to expression, expressed in colon.

It localises to the secreted. This chain is Mucosal pentraxin (Mptx1), found in Mus musculus (Mouse).